Here is a 232-residue protein sequence, read N- to C-terminus: Phosphatidylserine decarboxylase proenzyme (232 aa).

Catalysis depends on Ser-190, which acts as the Schiff-base intermediate with substrate; via pyruvic acid. The residue at position 190 (Ser-190) is a Pyruvic acid (Ser); by autocatalysis.

Belongs to the phosphatidylserine decarboxylase family. PSD-A subfamily. In terms of assembly, heterodimer of a large membrane-associated beta subunit and a small pyruvoyl-containing alpha subunit. The cofactor is pyruvate. Is synthesized initially as an inactive proenzyme. Formation of the active enzyme involves a self-maturation process in which the active site pyruvoyl group is generated from an internal serine residue via an autocatalytic post-translational modification. Two non-identical subunits are generated from the proenzyme in this reaction, and the pyruvate is formed at the N-terminus of the alpha chain, which is derived from the carboxyl end of the proenzyme. The post-translation cleavage follows an unusual pathway, termed non-hydrolytic serinolysis, in which the side chain hydroxyl group of the serine supplies its oxygen atom to form the C-terminus of the beta chain, while the remainder of the serine residue undergoes an oxidative deamination to produce ammonia and the pyruvoyl prosthetic group on the alpha chain.

It is found in the cell membrane. The catalysed reaction is a 1,2-diacyl-sn-glycero-3-phospho-L-serine + H(+) = a 1,2-diacyl-sn-glycero-3-phosphoethanolamine + CO2. It functions in the pathway phospholipid metabolism; phosphatidylethanolamine biosynthesis; phosphatidylethanolamine from CDP-diacylglycerol: step 2/2. Catalyzes the formation of phosphatidylethanolamine (PtdEtn) from phosphatidylserine (PtdSer). This Bradyrhizobium diazoefficiens (strain JCM 10833 / BCRC 13528 / IAM 13628 / NBRC 14792 / USDA 110) protein is Phosphatidylserine decarboxylase proenzyme.